Here is a 329-residue protein sequence, read N- to C-terminus: DNA-directed RNA polymerase subunit alpha (329 aa).

Residues 1–231 form an alpha N-terminal domain (alpha-NTD) region; the sequence is MQTTLLKPKT…EQLAVFAQLE (231 aa). An alpha C-terminal domain (alpha-CTD) region spans residues 249 to 329; the sequence is FDPILLRPVD…SWPPAGLDKR (81 aa).

This sequence belongs to the RNA polymerase alpha chain family. Homodimer. The RNAP catalytic core consists of 2 alpha, 1 beta, 1 beta' and 1 omega subunit. When a sigma factor is associated with the core the holoenzyme is formed, which can initiate transcription.

The enzyme catalyses RNA(n) + a ribonucleoside 5'-triphosphate = RNA(n+1) + diphosphate. Functionally, DNA-dependent RNA polymerase catalyzes the transcription of DNA into RNA using the four ribonucleoside triphosphates as substrates. The sequence is that of DNA-directed RNA polymerase subunit alpha from Variovorax paradoxus (strain S110).